We begin with the raw amino-acid sequence, 571 residues long: Phosphoenolpyruvate-protein phosphotransferase (571 aa).

The active-site Tele-phosphohistidine intermediate is H189. 2 residues coordinate phosphoenolpyruvate: R296 and R332. Positions 431 and 455 each coordinate Mg(2+). Phosphoenolpyruvate contacts are provided by residues 454-455 (ND) and R465. C502 (proton donor) is an active-site residue.

It belongs to the PEP-utilizing enzyme family. As to quaternary structure, homodimer. Mg(2+) serves as cofactor.

The protein localises to the cytoplasm. The catalysed reaction is L-histidyl-[protein] + phosphoenolpyruvate = N(pros)-phospho-L-histidyl-[protein] + pyruvate. In terms of biological role, general (non sugar-specific) component of the phosphoenolpyruvate-dependent sugar phosphotransferase system (sugar PTS). This major carbohydrate active-transport system catalyzes the phosphorylation of incoming sugar substrates concomitantly with their translocation across the cell membrane. Enzyme I transfers the phosphoryl group from phosphoenolpyruvate (PEP) to the phosphoryl carrier protein (HPr). The protein is Phosphoenolpyruvate-protein phosphotransferase (ptsI) of Buchnera aphidicola subsp. Acyrthosiphon pisum (strain APS) (Acyrthosiphon pisum symbiotic bacterium).